A 1071-amino-acid polypeptide reads, in one-letter code: Serine/threonine-protein phosphatase 6 regulatory ankyrin repeat subunit C (1071 aa).

28 ANK repeats span residues 7-36 (SDQP…EVNA), 40-69 (ERRT…NVNA), 73-102 (VWLT…DVTA), 106-135 (YWQT…SLNM), 139-168 (TGRA…NLSA), 172-201 (KDRQ…DKSC), 205-234 (RGYT…EIDE), 238-267 (FGNT…NVNQ), 271-301 (RGYT…DVNM), 305-334 (EGKS…EIDC), 338-367 (YGNT…DTAR), 371-400 (HGMF…LYSI), 422-451 (FGRT…DMNK), 455-484 (FGRT…EVNE), 488-539 (SGCT…DPCL), 543-573 (KGYS…TLGD), 578-607 (GSIS…CVDV), 611-640 (VGRS…SCLL), 645-674 (SKWG…GADL), 681-710 (EGQT…CPDM), 714-743 (RGRT…SVLS), 747-776 (QGRS…HSQP), 784-814 (HGYT…SIQE), 816-845 (NPFT…CNSL), 852-881 (KGRT…DIDA), 885-915 (SGRS…DLSL), 919-951 (NKNT…LINA), and 955-984 (MLQM…TVLA).

As to quaternary structure, protein phosphatase 6 (PP6) holoenzyme is proposed to be a heterotrimeric complex formed by the catalytic subunit, a SAPS domain-containing subunit (PP6R) and an ankyrin repeat-domain containing regulatory subunit (ARS).

In terms of biological role, putative regulatory subunit of protein phosphatase 6 (PP6) that may be involved in the recognition of phosphoprotein substrates. The sequence is that of Serine/threonine-protein phosphatase 6 regulatory ankyrin repeat subunit C (ankrd52) from Danio rerio (Zebrafish).